A 463-amino-acid chain; its full sequence is Probable mannan endo-1,4-beta-mannosidase F (463 aa).

The first 18 residues, 1 to 18, serve as a signal peptide directing secretion; sequence MRSLSSIALLSVVGAASA. One can recognise a CBM1 domain in the interval 19-54; the sequence is QAGPWAQCGGKSFSGSSECASGWKCQELNEWFSQCV. The interval 57-78 is disordered; the sequence is AESTTPTVSSTPTPTDAPSVSI. A compositionally biased stretch (low complexity) spans 59–77; sequence STTPTVSSTPTPTDAPSVS. Residues 75-118 are ser-rich linker; that stretch reads SVSITASVTTGINKSISVSSASKSTPLPSSSSASPSPRPTGSGS. Asparagine 87 carries N-linked (GlcNAc...) asparagine glycosylation. Low complexity predominate over residues 93–118; that stretch reads SSASKSTPLPSSSSASPSPRPTGSGS. Positions 93–121 are disordered; the sequence is SSASKSTPLPSSSSASPSPRPTGSGSFAK. Residues 119 to 463 are catalytic; sequence FAKADGLQFS…MDHMENVNKN (345 aa). 2 residues coordinate substrate: tryptophan 171 and asparagine 285. Glutamate 286 functions as the Proton donor/acceptor in the catalytic mechanism. Tyrosine 361 contributes to the substrate binding site. Glutamate 395 functions as the Nucleophile in the catalytic mechanism. Tryptophan 424 contacts substrate.

The protein belongs to the glycosyl hydrolase 5 (cellulase A) family.

The protein resides in the secreted. The catalysed reaction is Random hydrolysis of (1-&gt;4)-beta-D-mannosidic linkages in mannans, galactomannans and glucomannans.. Its function is as follows. Endo-1,4-mannanase, a crucial enzyme for depolymerization of seed galactomannans and wood galactoglucomannans. The sequence is that of Probable mannan endo-1,4-beta-mannosidase F (manF) from Aspergillus oryzae (strain ATCC 42149 / RIB 40) (Yellow koji mold).